Consider the following 403-residue polypeptide: F-box only protein 22 (403 aa).

Met1 is modified (N-acetylmethionine). The 53-residue stretch at Ser19–Ala71 folds into the F-box domain. A Phosphoserine modification is found at Ser128. The residue at position 194 (Lys194) is an N6-acetyllysine.

As to quaternary structure, directly interacts with SKP1 and CUL1.

It localises to the cytoplasm. The protein resides in the myofibril. It is found in the sarcomere. Its subcellular location is the z line. Substrate-recognition component of the SCF (SKP1-CUL1-F-box protein)-type E3 ubiquitin ligase complex. Promotes the proteasome-dependent degradation of key sarcomeric proteins, such as alpha-actinin (ACTN2) and filamin-C (FLNC), essential for maintenance of normal contractile function. This chain is F-box only protein 22 (FBXO22), found in Pongo abelii (Sumatran orangutan).